Consider the following 328-residue polypeptide: D-cysteine desulfhydrase (328 aa).

Lys51 is modified (N6-(pyridoxal phosphate)lysine).

The protein belongs to the ACC deaminase/D-cysteine desulfhydrase family. Homodimer. The cofactor is pyridoxal 5'-phosphate.

It catalyses the reaction D-cysteine + H2O = hydrogen sulfide + pyruvate + NH4(+) + H(+). Functionally, catalyzes the alpha,beta-elimination reaction of D-cysteine and of several D-cysteine derivatives. It could be a defense mechanism against D-cysteine. The protein is D-cysteine desulfhydrase of Salmonella paratyphi C (strain RKS4594).